We begin with the raw amino-acid sequence, 382 residues long: Protein arginine N-methyltransferase 2 (382 aa).

2 ANK repeats span residues 22–46 and 48–80; these read AAQT…FQDD and LGWS…AVDK. The region spanning 134–382 is the RMT2 domain; sequence KTSAGDNLVF…RLPIAKMSLI (249 aa). Residues F143, M177, 205 to 210, 228 to 230, 255 to 256, and D284 contribute to the S-adenosyl-L-methionine site; these read FGLGIV, EAH, and WQ.

The protein belongs to the class I-like SAM-binding methyltransferase superfamily. RMT2 methyltransferase family. In terms of assembly, monomer.

Its subcellular location is the cytoplasm. The protein localises to the nucleus. Its function is as follows. S-adenosyl-L-methionine-dependent protein-arginine N-methyltransferase that methylates the delta-nitrogen atom of arginine residues to form N5-methylarginine (type IV) in target proteins. Monomethylates ribosomal protein L12. The polypeptide is Protein arginine N-methyltransferase 2 (Cryptococcus neoformans var. neoformans serotype D (strain JEC21 / ATCC MYA-565) (Filobasidiella neoformans)).